Here is a 453-residue protein sequence, read N- to C-terminus: Allantoinase (453 aa).

His-59, His-61, Lys-146, His-186, His-242, and Asp-315 together coordinate Zn(2+). An N6-carboxylysine modification is found at Lys-146.

This sequence belongs to the metallo-dependent hydrolases superfamily. Allantoinase family. As to quaternary structure, homotetramer. Requires Zn(2+) as cofactor. In terms of processing, carboxylation allows a single lysine to coordinate two zinc ions.

It carries out the reaction (S)-allantoin + H2O = allantoate + H(+). It functions in the pathway nitrogen metabolism; (S)-allantoin degradation; allantoate from (S)-allantoin: step 1/1. Functionally, catalyzes the conversion of allantoin (5-ureidohydantoin) to allantoic acid by hydrolytic cleavage of the five-member hydantoin ring. The sequence is that of Allantoinase from Escherichia coli (strain SMS-3-5 / SECEC).